Reading from the N-terminus, the 326-residue chain is Peroxidase 6 (326 aa).

The first 20 residues, 1 to 20 (MKSFGLCLFILVSSPCLLQA), serve as a signal peptide directing secretion. N-linked (GlcNAc...) asparagine glycosylation occurs at Asn-21. Cystine bridges form between Cys-31/Cys-112, Cys-64/Cys-69, Cys-118/Cys-318, and Cys-197/Cys-228. Residue His-62 is the Proton acceptor of the active site. Residues Asp-63, Val-66, Gly-68, Asp-70, and Ser-72 each contribute to the Ca(2+) site. Residue Asn-163 is glycosylated (N-linked (GlcNAc...) asparagine). Residue His-190 participates in heme b binding. Thr-191 provides a ligand contact to Ca(2+). Residues Asn-206 and Asn-230 are each glycosylated (N-linked (GlcNAc...) asparagine). Ca(2+) contacts are provided by Asp-242, Thr-245, and Asp-250. A glycan (N-linked (GlcNAc...) asparagine) is linked at Asn-274.

This sequence belongs to the peroxidase family. Classical plant (class III) peroxidase subfamily. It depends on heme b as a cofactor. The cofactor is Ca(2+).

Its subcellular location is the secreted. It carries out the reaction 2 a phenolic donor + H2O2 = 2 a phenolic radical donor + 2 H2O. Removal of H(2)O(2), oxidation of toxic reductants, biosynthesis and degradation of lignin, suberization, auxin catabolism, response to environmental stresses such as wounding, pathogen attack and oxidative stress. These functions might be dependent on each isozyme/isoform in each plant tissue. The polypeptide is Peroxidase 6 (PER6) (Arabidopsis thaliana (Mouse-ear cress)).